A 647-amino-acid polypeptide reads, in one-letter code: Threonine--tRNA ligase (647 aa).

The 61-residue stretch at 1-61 (MIKITFPDGA…EEDGSIEIVT (61 aa)) folds into the TGS domain. The interval 240-538 (DHRKLGKELD…LIETYKGAFP (299 aa)) is catalytic. Residues Cys-334, His-385, and His-515 each coordinate Zn(2+).

The protein belongs to the class-II aminoacyl-tRNA synthetase family. Homodimer. It depends on Zn(2+) as a cofactor.

It is found in the cytoplasm. The catalysed reaction is tRNA(Thr) + L-threonine + ATP = L-threonyl-tRNA(Thr) + AMP + diphosphate + H(+). Functionally, catalyzes the attachment of threonine to tRNA(Thr) in a two-step reaction: L-threonine is first activated by ATP to form Thr-AMP and then transferred to the acceptor end of tRNA(Thr). Also edits incorrectly charged L-seryl-tRNA(Thr). The chain is Threonine--tRNA ligase from Streptococcus pyogenes serotype M49 (strain NZ131).